The chain runs to 2998 residues: Probable polyketide synthase 14 (2998 aa).

The region spanning 19–456 (EDDIAIIGIG…GSNCCLILSE (438 aa)) is the Ketosynthase family 3 (KS3) domain. Catalysis depends on for beta-ketoacyl synthase activity residues C189, H331, and H376. Positions 657-690 (GIEASFIVGHSLGEIPAAYCSGMITLDTLCYLIY) are acyl/malonyl transferase. Residue S667 is the For acyl/malonyl transferase activity of the active site. An N-terminal hotdog fold region spans residues 962–1084 (IDQLGFSLIE…GNFQLFTSGN (123 aa)). The PKS/mFAS DH domain maps to 962-1249 (IDQLGFSLIE…CKSLTIIKDS (288 aa)). H996 (proton acceptor; for dehydratase activity) is an active-site residue. Residues 1101 to 1249 (NLTKLTKNEL…CKSLTIIKDS (149 aa)) form a C-terminal hotdog fold region. D1159 functions as the Proton donor; for dehydratase activity in the catalytic mechanism. The chain crosses the membrane as a helical span at residues 1979-1999 (SILIHSGSGGIGLSALNILKW). Residues 2476-2553 (ENDTSIDSLF…SSIKLITNQL (78 aa)) enclose the Carrier domain. O-(pantetheine 4'-phosphoryl)serine is present on S2513. Residues 2559 to 2578 (DGQQQQHRQNKKNNNIPENK) form a disordered region. Low complexity predominate over residues 2561 to 2573 (QQQQHRQNKKNNN). Residues 2621–2641 (IFLTGSTGFLGAYLLWYLIQM) form a helical membrane-spanning segment.

Requires pantetheine 4'-phosphate as cofactor.

The protein resides in the membrane. Its function is as follows. Probable polyketide synthase. The sequence is that of Probable polyketide synthase 14 (pks14) from Dictyostelium discoideum (Social amoeba).